The primary structure comprises 252 residues: Vacuolar-sorting protein dot2 (252 aa).

It belongs to the SNF8 family. Component of the endosomal sorting complex required for transport II (ESCRT-II).

The protein resides in the cytoplasm. It localises to the nucleus. It is found in the endosome membrane. In terms of biological role, component of the endosomal sorting complex required for transport II (ESCRT-II), which is required for multivesicular body (MVB) formation and sorting of endosomal cargo proteins into MVBs. The MVB pathway mediates delivery of transmembrane proteins into the lumen of the lysosome for degradation. The ESCRT-II complex is probably involved in the recruitment of the ESCRT-III complex. Negatively regulates meiotic spindle pole body maturation via indirect regulation of the pcp1 gene. Required for efficient entry into pre-meiotic S phase. The sequence is that of Vacuolar-sorting protein dot2 (dot2) from Schizosaccharomyces pombe (strain 972 / ATCC 24843) (Fission yeast).